The chain runs to 419 residues: UDP-arabinose 4-epimerase 1 (419 aa).

A disordered region spans residues 1-21; it reads MFSFGRARSQGRQNRSMSLGG. Residues 1-32 are Cytoplasmic-facing; sequence MFSFGRARSQGRQNRSMSLGGLDYADPKKKNN. A helical; Signal-anchor for type II membrane protein transmembrane segment spans residues 33-51; it reads YLGKILLTASLTALCIFML. Residues 52 to 419 are Lumenal-facing; sequence KQSPTFNTPS…GLTTSSVSVY (368 aa). NAD(+) is bound at residue 72 to 103; it reads HVLVTGGAGYIGSHAALRLLKESYRVTIVDNL. The active-site Proton acceptor is Tyr-220.

The protein belongs to the NAD(P)-dependent epimerase/dehydratase family. Requires NAD(+) as cofactor. In terms of tissue distribution, high expression in roots. Also found in leaves, stems, flowers, and siliques.

The protein resides in the golgi apparatus. Its subcellular location is the golgi stack membrane. It catalyses the reaction UDP-beta-L-arabinopyranose = UDP-alpha-D-xylose. It functions in the pathway nucleotide-sugar biosynthesis; UDP-L-arabinose biosynthesis; UDP-L-arabinose from UDP-alpha-D-xylose: step 1/1. It participates in cell wall biogenesis; cell wall polysaccharide biosynthesis. In terms of biological role, acts as a UDP-D-xylose 4-epimerase but lacks both UDP-D-glucose and UDP-D-glucuronic acid 4-epimerase activities in vitro. The protein is UDP-arabinose 4-epimerase 1 of Arabidopsis thaliana (Mouse-ear cress).